Reading from the N-terminus, the 545-residue chain is Thermosome subunit alpha (545 aa).

This sequence belongs to the TCP-1 chaperonin family. Forms a Heterooligomeric complex of two stacked eight-membered rings.

Functionally, molecular chaperone; binds unfolded polypeptides in vitro, and has a weak ATPase activity. The polypeptide is Thermosome subunit alpha (thsA) (Archaeoglobus fulgidus (strain ATCC 49558 / DSM 4304 / JCM 9628 / NBRC 100126 / VC-16)).